The chain runs to 183 residues: NRR repressor homolog 1 (183 aa).

Disordered regions lie at residues 1-40 (MEGVDVKAPRPGCGGDDGGAAAASLSARREEEEEGAVVGG) and 66-183 (NGEE…PTDQ). Over residues 31–40 (EEEEGAVVGG) the composition is skewed to acidic residues. Residues 70–79 (GAAGGDGDGA) are compositionally biased toward gly residues. Positions 101 to 115 (FEFEEAAAGAGDDDA) are enriched in acidic residues. Over residues 135–145 (AVEKRRTEKEA) the composition is skewed to basic and acidic residues. Over residues 150–161 (AEDDDDEQEGGE) the composition is skewed to acidic residues. Basic and acidic residues predominate over residues 163–183 (VEGKEEHRPGRRVEAHGPTDQ).

The protein belongs to the NPR1-interactor family. In terms of assembly, interacts with NPR1/NH1. Interacts with NPR3/NH3.

The protein resides in the nucleus. Its function is as follows. Binds to and represses NPR1/NH1-mediated transcriptional activation of LG2 in vitro. The sequence is that of NRR repressor homolog 1 from Oryza sativa subsp. japonica (Rice).